Consider the following 228-residue polypeptide: Ion-translocating oxidoreductase complex subunit E (228 aa).

The next 5 helical transmembrane spans lie at 24 to 44 (LLGL…LGLG), 73 to 93 (VFVL…NAFF), 95 to 115 (ELYL…AIIG), 130 to 150 (LADG…LGAL), and 184 to 204 (GFLL…LIAL).

It belongs to the NqrDE/RnfAE family. In terms of assembly, the complex is composed of six subunits: RnfA, RnfB, RnfC, RnfD, RnfE and RnfG.

The protein localises to the cell inner membrane. Its function is as follows. Part of a membrane-bound complex that couples electron transfer with translocation of ions across the membrane. The sequence is that of Ion-translocating oxidoreductase complex subunit E from Thioalkalivibrio sulfidiphilus (strain HL-EbGR7).